Consider the following 277-residue polypeptide: Large ribosomal subunit protein uL2 (277 aa).

The segment at 222–277 is disordered; it reads GVAMNPVDHPHGGGEGRTSGGRHPVTPWGKPTKGKKTRSNKATDKFIMRSRHQRKK.

Belongs to the universal ribosomal protein uL2 family. In terms of assembly, part of the 50S ribosomal subunit. Forms a bridge to the 30S subunit in the 70S ribosome.

Its function is as follows. One of the primary rRNA binding proteins. Required for association of the 30S and 50S subunits to form the 70S ribosome, for tRNA binding and peptide bond formation. It has been suggested to have peptidyltransferase activity; this is somewhat controversial. Makes several contacts with the 16S rRNA in the 70S ribosome. This is Large ribosomal subunit protein uL2 from Brucella abortus (strain S19).